The primary structure comprises 831 residues: SID1 transmembrane family member 1 (831 aa).

An N-terminal signal peptide occupies residues 1–19 (MLDCPRLALLCALPWLLRA). Topologically, residues 20–308 (AVPGHRAEPL…SVKGSVYVKS (289 aa)) are extracellular. N-linked (GlcNAc...) asparagine glycosylation is found at Asn67, Asn83, Asn136, and Asn281. Residues 309 to 329 (SLFSVFVFLSFYLGCLLVVFV) form a helical membrane-spanning segment. Topologically, residues 330–441 (HHMRFQRKPV…DRRIVSKKYK (112 aa)) are cytoplasmic. The interval 354-408 (VSHPITASTPEGSNYGAIDESSSSPGRQMSSSDGGQPCHSDTDSSVEESDFDTMP) is disordered. A compositionally biased stretch (low complexity) spans 374 to 385 (SSSSPGRQMSSS). A compositionally biased stretch (acidic residues) spans 397–408 (SSVEESDFDTMP). Residues 442–462 (IYFWNIITIAVFYALPVMQLV) form a helical membrane-spanning segment. The Extracellular portion of the chain corresponds to 463–493 (ITYQTVVNVTGNQDICYYNFLCAHPLGVLSA). N-linked (GlcNAc...) asparagine glycosylation occurs at Asn470. Residues 494–514 (FNNILSNLGHVLLGFLFLLIV) traverse the membrane as a helical segment. At 515-540 (LRRDLLHRRALEAKDIFAMEYGIPKH) the chain is on the cytoplasmic side. Residues 541 to 561 (FGLFYAMGIALMMEGVLSACY) traverse the membrane as a helical segment. At 562 to 571 (HVCPNYSNFQ) the chain is on the extracellular side. Asn566 is a glycosylation site (N-linked (GlcNAc...) asparagine). Residues 572–589 (FDTSFMYMIAGLCMLKLY) traverse the membrane as a helical segment. Topologically, residues 590 to 599 (QTRHPDINAS) are cytoplasmic. A helical membrane pass occupies residues 600–620 (AYSAYASFAVVITLTVLGVVF). Residues 621–625 (GKNDV) lie on the Extracellular side of the membrane. The helical transmembrane segment at 626-646 (WFWIIFSAIHVLASLALSTQI) threads the bilayer. At 647-687 (YYMGRFKIDVSDTDLGIFRRAAMVFYTDCIQQCSRPLYMDR) the chain is on the cytoplasmic side. Residues 688-708 (MVLLIVGNLVNWSFALFGLIY) form a helical membrane-spanning segment. Residues 709-714 (RPRDFA) lie on the Extracellular side of the membrane. Residues 715 to 735 (SYMLGIFICNLLLYLAFYIIM) form a helical membrane-spanning segment. Topologically, residues 736-745 (KLRSSEKVLP) are cytoplasmic. Residues 746 to 766 (LPVFCIVATAVVWAAALYFFF) form a helical membrane-spanning segment. At 767–795 (QNLSSWEGTPAESREKNRECVLLGFFDDH) the chain is on the extracellular side. A glycan (N-linked (GlcNAc...) asparagine) is linked at Asn768. The chain crosses the membrane as a helical span at residues 796–816 (DIWHFLSATALFFSFLVLLTL). Residues 817 to 831 (DDDLDVVRRDQIPVF) lie on the Cytoplasmic side of the membrane.

The protein belongs to the SID1 family.

It is found in the membrane. Its function is as follows. In vitro binds long double-stranded RNA (dsRNA) (500 and 700 base pairs), but not dsRNA shorter than 300 bp. Not involved in RNA autophagy, a process in which RNA is directly imported into lysosomes in an ATP-dependent manner, and degraded. The polypeptide is SID1 transmembrane family member 1 (Sidt1) (Rattus norvegicus (Rat)).